A 421-amino-acid polypeptide reads, in one-letter code: Histidine--tRNA ligase (421 aa).

The protein belongs to the class-II aminoacyl-tRNA synthetase family. As to quaternary structure, homodimer.

The protein resides in the cytoplasm. The catalysed reaction is tRNA(His) + L-histidine + ATP = L-histidyl-tRNA(His) + AMP + diphosphate + H(+). The chain is Histidine--tRNA ligase from Coxiella burnetii (strain CbuK_Q154) (Coxiella burnetii (strain Q154)).